A 326-amino-acid polypeptide reads, in one-letter code: tRNA-modifying protein YgfZ (326 aa).

Positions 27 and 189 each coordinate folate.

Belongs to the tRNA-modifying YgfZ family.

The protein localises to the cytoplasm. Folate-binding protein involved in regulating the level of ATP-DnaA and in the modification of some tRNAs. It is probably a key factor in regulatory networks that act via tRNA modification, such as initiation of chromosomal replication. The sequence is that of tRNA-modifying protein YgfZ from Escherichia coli O157:H7 (strain EC4115 / EHEC).